The primary structure comprises 642 residues: Threonine--tRNA ligase (642 aa).

The region spanning 1–61 (MPVITLPDGS…ETDSELSIIT (61 aa)) is the TGS domain. Residues 243–534 (DHRKIGKQLD…LIEEYAGKFP (292 aa)) are catalytic. Zn(2+)-binding residues include Cys334, His385, and His511.

It belongs to the class-II aminoacyl-tRNA synthetase family. Homodimer. It depends on Zn(2+) as a cofactor.

The protein resides in the cytoplasm. It catalyses the reaction tRNA(Thr) + L-threonine + ATP = L-threonyl-tRNA(Thr) + AMP + diphosphate + H(+). Catalyzes the attachment of threonine to tRNA(Thr) in a two-step reaction: L-threonine is first activated by ATP to form Thr-AMP and then transferred to the acceptor end of tRNA(Thr). Also edits incorrectly charged L-seryl-tRNA(Thr). This Shewanella halifaxensis (strain HAW-EB4) protein is Threonine--tRNA ligase.